The following is a 536-amino-acid chain: SNW domain-containing protein 1 (536 aa).

Positions 1-46 (MALTSFLPAPTQLSQDQLEAEEKARSQRSRQTSLVSSRREPPPYGY) are disordered. The residue at position 2 (Ala-2) is an N-acetylalanine. Ser-14 carries the post-translational modification Phosphoserine. Lys-23 participates in a covalent cross-link: Glycyl lysine isopeptide (Lys-Gly) (interchain with G-Cter in SUMO2). An interaction with PPIL1 region spans residues 59–79 (GDGGAFPEIHVAQYPLDMGRK). Residues Lys-81, Lys-97, Lys-115, Lys-122, Lys-141, Lys-158, and Lys-170 each participate in a glycyl lysine isopeptide (Lys-Gly) (interchain with G-Cter in SUMO2) cross-link. The SNW stretch occupies residues 174–339 (AQYIRYTPSQ…KARERRAGIK (166 aa)). 2 positions are modified to phosphoserine: Ser-182 and Ser-190. Residue Lys-193 forms a Glycyl lysine isopeptide (Lys-Gly) (interchain with G-Cter in SUMO2) linkage. The interval 209–233 (PPRFKINKKIPRGPPSPPAPVMHSP) is disordered. 3 positions are modified to phosphoserine: Ser-224, Ser-232, and Ser-234. Glycyl lysine isopeptide (Lys-Gly) (interchain with G-Cter in SUMO2) cross-links involve residues Lys-240, Lys-258, Lys-286, Lys-339, Lys-344, Lys-416, Lys-441, and Lys-452. The segment at 311–386 (KMAQKEKEKH…RSKLQRNENR (76 aa)) is disordered. 2 stretches are compositionally biased toward basic and acidic residues: residues 472 to 489 (FVPD…RGRE) and 503 to 530 (KFLE…EHEG). The disordered stretch occupies residues 472–536 (FVPDKEFSGS…EHEGKKRRKE (65 aa)). A phosphoserine mark is found at Ser-479 and Ser-481. Lys-509 participates in a covalent cross-link: Glycyl lysine isopeptide (Lys-Gly) (interchain with G-Cter in SUMO2).

Belongs to the SNW family. Identified in the spliceosome C complex. Associates with U4/U6-U5 tri-small nuclear ribonucleoproteins (U4/U6-U5 tri-snRNPs). Component of the minor spliceosome, which splices U12-type introns. Interacts with SKI, SMAD2,SMAD3, RBPJ, RB1, PABPN1, MAGEA1, SIRT1, FOXN3, U2AF2, PPIL1, DAXX and ATP1B4. Interacts with VDR and RXRA; preferentially associates with VDR:RXRA heterodimers. Interacts with NCOR2. Interacts with MAML1. Interacts with NOTCH1 NICD; the interaction involves multimerized NOTCH1 NICD. Forms a complex with NOTCH1 NICD and MAML1; the association is dissociated by RBPJ. Associates with positive transcription elongation factor b (P-TEFb). Component of the SNARP complex which consists at least of SNIP1, SNW1, THRAP3, BCLAF1 and PNN.

It localises to the nucleus. Its function is as follows. Involved in pre-mRNA splicing as component of the spliceosome. As a component of the minor spliceosome, involved in the splicing of U12-type introns in pre-mRNAs. Required in the specific splicing of CDKN1A pre-mRNA; the function probably involves the recruitment of U2AF2 to the mRNA. May recruit PPIL1 to the spliceosome. May be involved in cyclin-D1/CCND1 mRNA stability through the SNARP complex which associates with both the 3'end of the CCND1 gene and its mRNA. Involved in transcriptional regulation. Modulates TGF-beta-mediated transcription via association with SMAD proteins, MYOD1-mediated transcription via association with PABPN1, RB1-mediated transcriptional repression, and retinoid-X receptor (RXR)- and vitamin D receptor (VDR)-dependent gene transcription in a cell line-specific manner probably involving coactivators NCOA1 and GRIP1. Is involved in NOTCH1-mediated transcriptional activation. Binds to multimerized forms of Notch intracellular domain (NICD) and is proposed to recruit transcriptional coactivators such as MAML1 to form an intermediate preactivation complex which associates with DNA-bound CBF-1/RBPJ to form a transcriptional activation complex by releasing SNW1 and redundant NOTCH1 NICD. The sequence is that of SNW domain-containing protein 1 (SNW1) from Bos taurus (Bovine).